A 186-amino-acid polypeptide reads, in one-letter code: ATP-dependent protease subunit HslV (186 aa).

Residue threonine 14 is part of the active site. The Na(+) site is built by alanine 168, cysteine 171, and threonine 174.

This sequence belongs to the peptidase T1B family. HslV subfamily. A double ring-shaped homohexamer of HslV is capped on each side by a ring-shaped HslU homohexamer. The assembly of the HslU/HslV complex is dependent on binding of ATP.

It localises to the cytoplasm. It catalyses the reaction ATP-dependent cleavage of peptide bonds with broad specificity.. Allosterically activated by HslU binding. Protease subunit of a proteasome-like degradation complex believed to be a general protein degrading machinery. This Bradyrhizobium sp. (strain BTAi1 / ATCC BAA-1182) protein is ATP-dependent protease subunit HslV.